We begin with the raw amino-acid sequence, 118 residues long: V-type proton ATPase subunit G 2 (118 aa).

Residues 23–91 (ADARKRKARR…QGMQSSQQRN (69 aa)) are disordered. The segment covering 35 to 55 (QAKEEAQMEVEQYRREREQEF) has biased composition (basic and acidic residues). Polar residues-rich tracts occupy residues 56 to 69 (QSKQ…QGNL) and 78 to 89 (RRQVQGMQSSQQ).

The protein belongs to the V-ATPase G subunit family. V-ATPase is a heteromultimeric enzyme made up of two complexes: the ATP-hydrolytic V1 complex and the proton translocation V0 complex. The V1 complex consists of three catalytic AB heterodimers that form a heterohexamer, three peripheral stalks each consisting of EG heterodimers, one central rotor including subunits D and F, and the regulatory subunits C and H. The proton translocation complex V0 consists of the proton transport subunit a, a ring of proteolipid subunits c9c'', rotary subunit d, subunits e and f, and the accessory subunits ATP6AP1/Ac45 and ATP6AP2/PRR.

Its subcellular location is the melanosome. The protein resides in the cytoplasmic vesicle. The protein localises to the clathrin-coated vesicle membrane. In terms of biological role, subunit of the V1 complex of vacuolar(H+)-ATPase (V-ATPase), a multisubunit enzyme composed of a peripheral complex (V1) that hydrolyzes ATP and a membrane integral complex (V0) that translocates protons. V-ATPase is responsible for acidifying and maintaining the pH of intracellular compartments and in some cell types, is targeted to the plasma membrane, where it is responsible for acidifying the extracellular environment. This is V-type proton ATPase subunit G 2 (Atp6v1g2) from Mus musculus (Mouse).